A 378-amino-acid polypeptide reads, in one-letter code: MILTRSVVLGFLGSASLALASPVAELAEGSRLTPRGSACSYSGTSGAAAAIAGKAGCSSITLNNVVVPAGTTLDLTGLASGTKVIFEGTTTFGYKQWAGPLISISGTNIQVSGASGHLIDGQGSRWWDGEGSNSKTNIKPKFFFAHSLKGSSTITGLNIKDSPVQVFSISGSSGLTISGVTIDNKNGDTNSLGHNTDGFDIGDSDSITITGATVYNQDDCLAINSGTNIVFSGGYCSGGHGLSIGSVGGRSNNVVETVHISSTQVVNSQNGVRVKAVSGATGTIKGVTFQDITLSGITSQGITIRQEYTNSGYTGSPTTGVPITGLTLNNVHGTVTSKGTDITIECGSSASCSGWTWTKVAVSGGKADVCKNAPSGTC.

Positions 1–20 (MILTRSVVLGFLGSASLALA) are cleaved as a signal peptide. A disulfide bond links Cys-39 and Cys-57. 5 PbH1 repeats span residues 172–203 (SSGLTISGVTIDNKNGDTNSLGHNTDGFDIGD), 204–225 (SDSITITGATVYNQDDCLAINS), 226–246 (GTNIVFSGGYCSGGHGLSIGS), 255–276 (VETVHISSTQVVNSQNGVRVKA), and 284–306 (IKGVTFQDITLSGITSQGITIRQ). Asp-218 functions as the Proton donor in the catalytic mechanism. A disulfide bond links Cys-220 and Cys-236. His-240 is an active-site residue. Cystine bridges form between Cys-346-Cys-352 and Cys-370-Cys-378.

The protein belongs to the glycosyl hydrolase 28 family.

Its subcellular location is the secreted. It catalyses the reaction (1,4-alpha-D-galacturonosyl)n+m + H2O = (1,4-alpha-D-galacturonosyl)n + (1,4-alpha-D-galacturonosyl)m.. The polypeptide is Polygalacturonase (PEPG1) (Penicillium expansum (Blue mold rot fungus)).